A 215-amino-acid polypeptide reads, in one-letter code: Phosphoserine phosphatase (215 aa).

The Nucleophile role is filled by Asp-11. 2 residues coordinate Mg(2+): Asp-11 and Asp-13. Residue Asp-13 is the Proton donor of the active site. Residues Glu-20, Arg-56, Ser-99–Gly-100, and Lys-144 contribute to the substrate site. Asp-167 provides a ligand contact to Mg(2+). Asn-170 is a binding site for substrate.

It belongs to the HAD-like hydrolase superfamily. SerB family. Requires Mg(2+) as cofactor.

It catalyses the reaction O-phospho-L-serine + H2O = L-serine + phosphate. The enzyme catalyses O-phospho-D-serine + H2O = D-serine + phosphate. The protein operates within amino-acid biosynthesis; L-serine biosynthesis; L-serine from 3-phospho-D-glycerate: step 3/3. This Streptococcus thermophilus (strain ATCC BAA-250 / LMG 18311) protein is Phosphoserine phosphatase.